A 332-amino-acid polypeptide reads, in one-letter code: Cinnamoyl-CoA reductase 2 (332 aa).

NADP(+) contacts are provided by residues 12-18, Arg37, Lys43, 63-64, 83-85, Tyr156, Lys160, 183-186, and Ser198; these read GAGGYIA, DL, TAS, and PVLV. A disulfide bridge connects residues Cys149 and Cys157. The Proton donor role is filled by Lys160.

This sequence belongs to the NAD(P)-dependent epimerase/dehydratase family. Dihydroflavonol-4-reductase subfamily. Expressed at low levels in leaves, stems and flowers.

It carries out the reaction (E)-cinnamaldehyde + NADP(+) + CoA = (E)-cinnamoyl-CoA + NADPH + H(+). The protein operates within aromatic compound metabolism; phenylpropanoid biosynthesis. Its function is as follows. Cinnamoyl-CoA reductase probably involved in the formation of phenolic compounds associated with the hypersensitive response. Seems not to be involved in lignin biosynthesis. This is Cinnamoyl-CoA reductase 2 (CCR2) from Arabidopsis thaliana (Mouse-ear cress).